Reading from the N-terminus, the 888-residue chain is MQDKYNHLDVERSAQTHWNAADAYRVTEDASRKKYYACSMLPYPSGKLHMGHVRNYTINDMLSRYLRMKGYNVLMPMGWDAFGLPAENAALKNGVPPAQWTYDNIAYMKKQMQAMGLAVDWSREIATCDPSYYKWNQWLFLKMLEKGIAYRKTQVVNWDPVDQTVLANEQVIDGKGWRTGATVEKREIPGYYLKITDYAEELLGSVQHKLPGWPERVKLMQENWIGKSEGVRFAFLHDIKDASGALIGDGQMYVFTTRADTIMGVTFCAVAPEHPLAVHAAASNPALAAFVEECKSGGTTEAELATQEKKGQPTGLFVTHPLTGDKVEVWVGNYVLMSYGDGAVMGVPAHDERDFEFAKKYGLPIKQVTDVKGQAYSLDAWADWYGDKQHGIAINSGKYDGLAFKAAVDAIAADLAALGLGEKKTTWRLRDWGVSRQRYWGTPIPIIHCDEHGAVPVPEKDLPVVLPMDCIPDGSGNPLHKHEGFHAGVVCPVCGKPARRETDTMDTFVDSSWYFMRYCDPKNSEAMVAGGADYWMPMDQYIGGIEHAILHLLYARFWTKVMRDLGLVKVDEPFTKLLTQGMVLNHIYSRRTDKGGKEYFWPHDVEHVLDDTGKIAGARLKNAVGDLPVGTAIDYEGVGTMSKSKNNGVDPQDIIEKYGADTARLYTMFTAPPEATLEWNDAGVEGSYRFLRRVWNFGVKLNAMNSGANGADAACAKGLFDKETKALRLEVHTLLKQVDYDYQRMQYNTVVSGGMKLLNALEDFKGEISAASLAALREGFSVLLRCLYPAAPHLTHALWSELGYAAEAGDLLDTPWPEVDASALQQDEIELMLQINGKLRGSVTVPAGADKAVIEAAALASEAFVKQAAGAPAKKVIVVPGRLVNIVV.

Positions Pro42–His52 match the 'HIGH' region motif. The 'KMSKS' region motif lies at Thr640–Ser644. Residue Lys643 participates in ATP binding.

This sequence belongs to the class-I aminoacyl-tRNA synthetase family.

The protein localises to the cytoplasm. The catalysed reaction is tRNA(Leu) + L-leucine + ATP = L-leucyl-tRNA(Leu) + AMP + diphosphate. This chain is Leucine--tRNA ligase, found in Polaromonas naphthalenivorans (strain CJ2).